A 218-amino-acid polypeptide reads, in one-letter code: Hypoxanthine-guanine phosphoribosyltransferase (218 aa).

At Ala-2 the chain carries N-acetylalanine. Lys-69 contributes to the GMP binding site. The residue at position 103 (Lys-103) is an N6-acetyllysine. Lys-115 participates in a covalent cross-link: Glycyl lysine isopeptide (Lys-Gly) (interchain with G-Cter in SUMO1); alternate. Lys-115 participates in a covalent cross-link: Glycyl lysine isopeptide (Lys-Gly) (interchain with G-Cter in SUMO2); alternate. GMP-binding positions include 134–142 (EDIIDTGKT), Lys-166, 186–188 (KFV), and Asp-194. The active-site Proton acceptor is Asp-138. Position 142 is a phosphothreonine (Thr-142). Asp-194 contributes to the Mg(2+) binding site.

It belongs to the purine/pyrimidine phosphoribosyltransferase family. In terms of assembly, homotetramer. Mg(2+) is required as a cofactor.

It localises to the cytoplasm. The catalysed reaction is IMP + diphosphate = hypoxanthine + 5-phospho-alpha-D-ribose 1-diphosphate. It catalyses the reaction GMP + diphosphate = guanine + 5-phospho-alpha-D-ribose 1-diphosphate. It functions in the pathway purine metabolism; IMP biosynthesis via salvage pathway; IMP from hypoxanthine: step 1/1. Its function is as follows. Converts guanine to guanosine monophosphate, and hypoxanthine to inosine monophosphate. Transfers the 5-phosphoribosyl group from 5-phosphoribosylpyrophosphate onto the purine. Plays a central role in the generation of purine nucleotides through the purine salvage pathway. This is Hypoxanthine-guanine phosphoribosyltransferase (HPRT1) from Sus scrofa (Pig).